Consider the following 449-residue polypeptide: Tubulin alpha-2B chain (449 aa).

Q11 contacts GTP. K40 is modified (N6-acetyllysine). Positions 71, 140, 144, 145, 179, 206, and 228 each coordinate GTP. Position 71 (E71) interacts with Mg(2+). E254 is an active-site residue.

Belongs to the tubulin family. As to quaternary structure, dimer of alpha and beta chains. A typical microtubule is a hollow water-filled tube with an outer diameter of 25 nm and an inner diameter of 15 nM. Alpha-beta heterodimers associate head-to-tail to form protofilaments running lengthwise along the microtubule wall with the beta-tubulin subunit facing the microtubule plus end conferring a structural polarity. Microtubules usually have 13 protofilaments but different protofilament numbers can be found in some organisms and specialized cells. Requires Mg(2+) as cofactor. Post-translationally, acetylation of alpha chains at Lys-40 stabilizes microtubules and affects affinity and processivity of microtubule motors. This modification has a role in multiple cellular functions, ranging from cell motility, cell cycle progression or cell differentiation to intracellular trafficking and signaling.

The protein localises to the cytoplasm. Its subcellular location is the cytoskeleton. It is found in the spindle. The protein resides in the nucleus. The catalysed reaction is GTP + H2O = GDP + phosphate + H(+). Functionally, tubulin is the major constituent of microtubules, a cylinder consisting of laterally associated linear protofilaments composed of alpha- and beta-tubulin heterodimers. Microtubules grow by the addition of GTP-tubulin dimers to the microtubule end, where a stabilizing cap forms. Below the cap, tubulin dimers are in GDP-bound state, owing to GTPase activity of alpha-tubulin. In Physarum polycephalum (Slime mold), this protein is Tubulin alpha-2B chain (ALTBE).